Reading from the N-terminus, the 208-residue chain is Uridine kinase (208 aa).

Glycine 12–threonine 19 contacts ATP.

The protein belongs to the uridine kinase family.

It localises to the cytoplasm. It carries out the reaction uridine + ATP = UMP + ADP + H(+). It catalyses the reaction cytidine + ATP = CMP + ADP + H(+). It participates in pyrimidine metabolism; CTP biosynthesis via salvage pathway; CTP from cytidine: step 1/3. Its pathway is pyrimidine metabolism; UMP biosynthesis via salvage pathway; UMP from uridine: step 1/1. The sequence is that of Uridine kinase from Streptococcus pyogenes serotype M18 (strain MGAS8232).